The sequence spans 1273 residues: DNA polymerase 037L (1273 aa).

The stretch at 679-837 (IRKNAITEEL…ENKSKEDIDE (159 aa)) forms a coiled coil.

It belongs to the DNA polymerase type-B family.

It carries out the reaction DNA(n) + a 2'-deoxyribonucleoside 5'-triphosphate = DNA(n+1) + diphosphate. In terms of biological role, DNA-directed DNA polymerase involved in viral DNA replication. The chain is DNA polymerase 037L (DPOL) from Invertebrate iridescent virus 6 (IIV-6).